The primary structure comprises 557 residues: Formate--tetrahydrofolate ligase (557 aa).

ATP is bound at residue 66 to 73; the sequence is TPAGEGKS.

This sequence belongs to the formate--tetrahydrofolate ligase family.

The enzyme catalyses (6S)-5,6,7,8-tetrahydrofolate + formate + ATP = (6R)-10-formyltetrahydrofolate + ADP + phosphate. It functions in the pathway one-carbon metabolism; tetrahydrofolate interconversion. This Clostridium botulinum (strain Kyoto / Type A2) protein is Formate--tetrahydrofolate ligase.